Here is a 392-residue protein sequence, read N- to C-terminus: Pannexin-3 (392 aa).

Over 1–39 the chain is Cytoplasmic; that stretch reads MSLAHTAAEYMLSDALLPDRRGSRLKGLRLELPLDKMVK. The helical transmembrane segment at 40–60 threads the bilayer; it reads FITVGFPLLLMSLAFAQEFSS. Over 61 to 113 the chain is Extracellular; that stretch reads GSPISCFSPSNFSVRQAAYVDSSCWDSLAHHTQDKAGQYKVKSLWPHKALPYS. The N-linked (GlcNAc...) asparagine glycan is linked to asparagine 71. A helical transmembrane segment spans residues 114-134; that stretch reads LLALAVAMYLPVLLWQYVAVP. Residues 135 to 215 lie on the Cytoplasmic side of the membrane; sequence SLSSDLLFII…VATYLLRNAL (81 aa). The helical transmembrane segment at 216 to 236 threads the bilayer; sequence LLLFTSATYLYLGQFHLDVFF. At 237–267 the chain is on the extracellular side; it reads QDEFNCFIKTGLLHDETHVPELITCRLTSLS. Residues 268 to 288 traverse the membrane as a helical segment; the sequence is VFQIVSVSSAAIYTILVPVII. Topologically, residues 289 to 392 are cytoplasmic; the sequence is YNLTRLCRWD…LTQHTYDEHA (104 aa).

Belongs to the pannexin family. As to quaternary structure, homoheptameric. N-glycosylation may play a role in cell surface targeting. Expressed in skin, cartilage, heart, lung, liver, spleen, thymus and kidney. Not expressed in brain. Expressed in calvarial cells.

The protein localises to the cell membrane. The protein resides in the endoplasmic reticulum membrane. The catalysed reaction is Ca(2+)(in) = Ca(2+)(out). It carries out the reaction ATP(in) = ATP(out). Regulator of osteoblast differentiation by functionning as a Ca(2+) channel in the endoplasmic reticulum which regulates calmodulin (CaM) pathways. Allows ATP release into the extracellular space and activation or purinergic receptors. The protein is Pannexin-3 (Panx3) of Mus musculus (Mouse).